A 730-amino-acid chain; its full sequence is Denticleless protein homolog (730 aa).

Met-1 carries the post-translational modification N-acetylmethionine. WD repeat units follow at residues 47–89 (GVPV…FRKK), 96–135 (AHWN…LIGT), and 138–178 (GHQC…KDGF). Positions 168–171 (WDTR) match the DDB1-binding motif motif. Residues 188–198 (AHNTSDKQTPS) show a composition bias toward polar residues. Positions 188–210 (AHNTSDKQTPSKPKKKQNSKGLA) are disordered. Thr-196 carries the post-translational modification Phosphothreonine. A Nuclear localization signal motif is present at residues 197-203 (PSKPKKK). WD repeat units lie at residues 214 to 253 (DFQQ…TAYR), 267 to 308 (SSTR…TSPV), 313 to 354 (GHQN…QPPT), and 358 to 398 (GHSQ…EEKP). The short motif at 243-246 (WDLR) is the DDB1-binding motif element. The interval 399 to 443 (GGDKLSTVGWASQKKKESRPGLVTVTSSQSTPAKAPRAKCNPSNS) is disordered. Residues Ser-410 and Ser-426 each carry the phosphoserine modification. Thr-464 is modified (phosphothreonine; by CDK1 and CDK2). The disordered stretch occupies residues 465–498 (PTFSIKTSPAKARSPINRRGSVSSVSPKPPSSFK). Phosphoserine occurs at positions 485, 490, 495, and 512. At Thr-516 the chain carries Phosphothreonine. A Phosphoserine modification is found at Ser-557. 2 disordered regions span residues 599-631 (SKDS…YASE) and 644-703 (GEGS…TITP). 2 positions are modified to phosphoserine: Ser-676 and Ser-679. Polar residues predominate over residues 679 to 689 (SPSSQTPNSRR). Thr-684 and Thr-702 each carry phosphothreonine. Ser-717 is subject to Phosphoserine.

It belongs to the WD repeat cdt2 family. In terms of assembly, component of the DCX(DTL) E3 ubiquitin ligase complex (also called CRL4(CDT2)), at least composed of CUL4 (CUL4A or CUL4B), DDB1, DTL/CDT2 and RBX1. Interacts with CDKN1A. Interacts with DDB1. Interacts with FBXO11; SCF(FBXWO11) controls DTL stability but DCX(DTL) does not control FBXO11 stability. Interacts with CRY1. In terms of processing, ubiquitinated by the anaphase promoting complex/cyclosome (APC/C). Autoubiquitinated through 'Lys-48'-polyubiquitin chains in a PCNA-independent reaction, allowing proteasomal turnover. Polyubiquitinated by SCF(FBXO11) when not phosphorylated, leading to its degradation. A tight regulation of the polyubiquitination by SCF(FBXO11) is involved in the control of different processes such as TGF-beta signaling, cell cycle progression and exit. Phosphorylated at Thr-464 by CDK1/Cyclin-B and CDK2/Cyclin-A but not by CDK2/Cyclin-E, MAPK1 or PLK1. Phosphorylation at Thr-464 inhibits the interaction with FBXO11 and decreases upon cell cycle exit induced by TGF-beta or serum starvation. As to expression, expressed in placenta and testis, very low expression seen in skeletal muscle. Detected in all hematopoietic tissues examined, with highest expression in thymus and bone marrow. A low level detected in the spleen and lymph node, and barely detectable level in the peripheral leukocytes. RA treatment down-regulated the expression in NT2 cell.

Its subcellular location is the nucleus. It localises to the nucleus membrane. It is found in the cytoplasm. The protein localises to the cytoskeleton. The protein resides in the microtubule organizing center. Its subcellular location is the centrosome. It localises to the chromosome. The protein operates within protein modification; protein ubiquitination. Substrate-specific adapter of a DCX (DDB1-CUL4-X-box) E3 ubiquitin-protein ligase complex required for cell cycle control, DNA damage response and translesion DNA synthesis. The DCX(DTL) complex, also named CRL4(CDT2) complex, mediates the polyubiquitination and subsequent degradation of CDT1, CDKN1A/p21(CIP1), FBH1, KMT5A and SDE2. CDT1 degradation in response to DNA damage is necessary to ensure proper cell cycle regulation of DNA replication. CDKN1A/p21(CIP1) degradation during S phase or following UV irradiation is essential to control replication licensing. KMT5A degradation is also important for a proper regulation of mechanisms such as TGF-beta signaling, cell cycle progression, DNA repair and cell migration. Most substrates require their interaction with PCNA for their polyubiquitination: substrates interact with PCNA via their PIP-box, and those containing the 'K+4' motif in the PIP box, recruit the DCX(DTL) complex, leading to their degradation. In undamaged proliferating cells, the DCX(DTL) complex also promotes the 'Lys-164' monoubiquitination of PCNA, thereby being involved in PCNA-dependent translesion DNA synthesis. The DDB1-CUL4A-DTL E3 ligase complex regulates the circadian clock function by mediating the ubiquitination and degradation of CRY1. The polypeptide is Denticleless protein homolog (DTL) (Homo sapiens (Human)).